The following is a 365-amino-acid chain: Transcription factor aptf-1 (365 aa).

2 disordered regions span residues 13–40 and 93–126; these read EFVRGSQCDEEDEEEQQRQSSQRPPFYE and TPPQQQQQQGTGGSGEEDYCIPKSEDRDHSSNYS. The interval 223–356 is H-S-H (helix-span-helix), dimerization; sequence RRKQANVTAW…MIDESIKYID (134 aa).

Belongs to the AP-2 family. As to quaternary structure, binds DNA as a dimer. In terms of tissue distribution, expressed in five interneurons AIB, RIB and RIS.

The protein localises to the nucleus. Its function is as follows. Transcription factor, which is required in the single sleep-active ring interneuron RIS for sleep-like behavioral quiescence induced by neuropeptide signaling in larvae. Regulates gene expression of sleep-inducing FMRFamide-like neuropeptide flp-11 in RIS. The chain is Transcription factor aptf-1 from Caenorhabditis elegans.